A 331-amino-acid polypeptide reads, in one-letter code: Ketol-acid reductoisomerase (NADP(+)) (331 aa).

Residues M1–T181 form the KARI N-terminal Rossmann domain. Residues Y24 to Q27, R47, S50, and D82 to Q85 each bind NADP(+). The active site involves H107. G133 serves as a coordination point for NADP(+). The region spanning T182 to L327 is the KARI C-terminal knotted domain. 4 residues coordinate Mg(2+): D190, E194, E226, and E230. Residue S251 participates in substrate binding.

It belongs to the ketol-acid reductoisomerase family. Requires Mg(2+) as cofactor.

The enzyme catalyses (2R)-2,3-dihydroxy-3-methylbutanoate + NADP(+) = (2S)-2-acetolactate + NADPH + H(+). It carries out the reaction (2R,3R)-2,3-dihydroxy-3-methylpentanoate + NADP(+) = (S)-2-ethyl-2-hydroxy-3-oxobutanoate + NADPH + H(+). Its pathway is amino-acid biosynthesis; L-isoleucine biosynthesis; L-isoleucine from 2-oxobutanoate: step 2/4. It participates in amino-acid biosynthesis; L-valine biosynthesis; L-valine from pyruvate: step 2/4. In terms of biological role, involved in the biosynthesis of branched-chain amino acids (BCAA). Catalyzes an alkyl-migration followed by a ketol-acid reduction of (S)-2-acetolactate (S2AL) to yield (R)-2,3-dihydroxy-isovalerate. In the isomerase reaction, S2AL is rearranged via a Mg-dependent methyl migration to produce 3-hydroxy-3-methyl-2-ketobutyrate (HMKB). In the reductase reaction, this 2-ketoacid undergoes a metal-dependent reduction by NADPH to yield (R)-2,3-dihydroxy-isovalerate. The sequence is that of Ketol-acid reductoisomerase (NADP(+)) from Heliobacterium modesticaldum (strain ATCC 51547 / Ice1).